We begin with the raw amino-acid sequence, 240 residues long: ATP-dependent dethiobiotin synthetase BioD (240 aa).

Residue 12-17 (EIGKTV) participates in ATP binding. Thr16 contributes to the Mg(2+) binding site. The active site involves Lys37. Ser41 is a substrate binding site. Residues Asp54, 115-118 (EGSG), 179-180 (NQ), and 207-209 (PYI) each bind ATP. Residues Asp54 and Glu115 each coordinate Mg(2+).

The protein belongs to the dethiobiotin synthetase family. In terms of assembly, homodimer. Requires Mg(2+) as cofactor.

The protein localises to the cytoplasm. The enzyme catalyses (7R,8S)-7,8-diammoniononanoate + CO2 + ATP = (4R,5S)-dethiobiotin + ADP + phosphate + 3 H(+). The protein operates within cofactor biosynthesis; biotin biosynthesis; biotin from 7,8-diaminononanoate: step 1/2. Functionally, catalyzes a mechanistically unusual reaction, the ATP-dependent insertion of CO2 between the N7 and N8 nitrogen atoms of 7,8-diaminopelargonic acid (DAPA, also called 7,8-diammoniononanoate) to form a ureido ring. The protein is ATP-dependent dethiobiotin synthetase BioD of Clostridium acetobutylicum (strain ATCC 824 / DSM 792 / JCM 1419 / IAM 19013 / LMG 5710 / NBRC 13948 / NRRL B-527 / VKM B-1787 / 2291 / W).